A 422-amino-acid chain; its full sequence is Glycine amidinotransferase, mitochondrial (422 aa).

A mitochondrion-targeting transit peptide spans 1-37 (MLRVRCLRGGSRGAEAAHFIGSRLGRAFTGWVQRSLQ). Residues aspartate 253 and histidine 302 contribute to the active site. The Amidino-cysteine intermediate role is filled by cysteine 406. Threonine 416 carries the phosphothreonine modification.

It belongs to the amidinotransferase family. Homodimer.

It is found in the mitochondrion inner membrane. The catalysed reaction is L-arginine + glycine = guanidinoacetate + L-ornithine. It participates in amine and polyamine biosynthesis; creatine biosynthesis; creatine from L-arginine and glycine: step 1/2. Catalyzes the biosynthesis of guanidinoacetate, the immediate precursor of creatine. Creatine plays a vital role in energy metabolism in muscle tissues. May play a role in embryonic and central nervous system development. In Gallus gallus (Chicken), this protein is Glycine amidinotransferase, mitochondrial.